A 229-amino-acid chain; its full sequence is Acetylcholine-binding protein (229 aa).

The N-terminal stretch at 1–19 (MRRNIFCLACLWIVQACLS) is a signal peptide. Asparagine 85 carries N-linked (GlcNAc...) asparagine glycosylation. The Ig-like domain maps to 114–217 (PEVLTPQLAR…PEAYEDVEVS (104 aa)). A disulfide bridge links cysteine 142 with cysteine 155.

Homopentamer. Post-translationally, N-glycosylated. Expressed by glial cells.

It is found in the synaptic cleft. Its function is as follows. Binds to acetylcholine. Modulates neuronal synaptic transmission. The chain is Acetylcholine-binding protein from Lymnaea stagnalis (Great pond snail).